The following is a 282-amino-acid chain: MANQLILLKKDFFTDEQQAVTVADRYPQDVFAEHTHEFCELVMVWRGNGLHVLNERPYRITRGDLFYIRAEDKHSYTSVNDLVLQNIIYCPERLKLNVNWQAMIPGFQGAQWHPHWRLGSMGMNQARQVINQLEHESNGRDPLANEMAELLFGQLVMTLKRHRYATDDLPATSRETLLDKLITALANSLESSFALDAFCQQEQCSERVLRQQFRAQTGMTINQYLRQVRICHAQYLLQHSPLMISEISMQCGFEDSNYFSVVFTRETGMTPSQWRHLSNQSD.

The HTH araC/xylS-type domain occupies 179-277 (DKLITALANS…GMTPSQWRHL (99 aa)). 2 DNA-binding regions (H-T-H motif) span residues 196–217 (DAFCQQEQCSERVLRQQFRAQT) and 244–267 (ISEISMQCGFEDSNYFSVVFTRET).

As to quaternary structure, binds DNA as a dimer.

The protein resides in the cytoplasm. Activates expression of the rhaSR operon in response to L-rhamnose. This Salmonella dublin (strain CT_02021853) protein is HTH-type transcriptional activator RhaR.